The sequence spans 328 residues: GMP reductase (328 aa).

Catalysis depends on C176, which acts as the Thioimidate intermediate. 205–228 (IIADGGIRTHGDIAKSIRFGASMI) serves as a coordination point for NADP(+).

This sequence belongs to the IMPDH/GMPR family. GuaC type 2 subfamily.

It catalyses the reaction IMP + NH4(+) + NADP(+) = GMP + NADPH + 2 H(+). Its function is as follows. Catalyzes the irreversible NADPH-dependent deamination of GMP to IMP. It functions in the conversion of nucleobase, nucleoside and nucleotide derivatives of G to A nucleotides, and in maintaining the intracellular balance of A and G nucleotides. This Streptococcus pneumoniae (strain ATCC 700669 / Spain 23F-1) protein is GMP reductase.